The sequence spans 937 residues: Calsyntenin-2 (937 aa).

The signal sequence occupies residues 1–22 (MKMRAITAMLLLVLSGQCGILA). The Extracellular portion of the chain corresponds to 23-818 (GKVNKHKPWI…NSDHISGTPP (796 aa)). Cadherin domains follow at residues 32 to 148 (IETS…SPVF) and 149 to 249 (REPL…KPGW). Asn-86 carries N-linked (GlcNAc...) asparagine glycosylation. Asn-330, Asn-365, and Asn-716 each carry an N-linked (GlcNAc...) asparagine glycan. Residues 819–839 (AATVVIVMCIAALVVIVVLGI) traverse the membrane as a helical segment. The Cytoplasmic segment spans residues 840 to 937 (YRIHTTHQDS…LEWDPSTLPY (98 aa)). The interval 846-937 (HQDSSKEDEE…LEWDPSTLPY (92 aa)) is disordered. Residues 865-874 (DNSNLNSIEG) are compositionally biased toward polar residues. Composition is skewed to acidic residues over residues 881-900 (VREE…DDLA) and 907-917 (ESEDSDEDEET).

The protein belongs to the calsyntenin family. Homooligomer and heterooligomer; mediates both homophilic and heterophilc interactions with clstn1 and clstn3 paralogs via cadherin domains. In terms of tissue distribution, by 48 hours post-fertilization (hpf), widely expressed in the brain, with strong expression in the telencephalon and the midbrain.

The protein localises to the postsynaptic cell membrane. The protein resides in the endoplasmic reticulum membrane. Its subcellular location is the golgi apparatus membrane. It is found in the cell projection. It localises to the dendrite. In terms of biological role, postsynaptic adhesion molecule. Promotes synapse development by acting as a cell adhesion molecule at the postsynaptic membrane, which associates with presynaptic neurexins. This chain is Calsyntenin-2 (clstn2a), found in Danio rerio (Zebrafish).